The chain runs to 471 residues: MENFKHLPEPFRIRVIEPVKRTTRAYREEAIIKSGMNPFLLDSEDVFIDLLTDSGTGAVTQSMQAAMMRGDEAYSGSRSYYALAESVKNIFGYQYTIPTHQGRGAEQIYIPVLIKKREQEKGLDRSKMVAFSNYFFDTTQGHSQINGCTVRNVYIKEAFDTGVRYDFKGNFDLEGLERGIEEVGPNNVPYIVATITSNSAGGQPVSLANLKAMYSIAKKYDIPVVMDSARFAENAYFIKQREAEYKDWTIEQITRETYKYADMLAMSAKKDAMVPMGGLLCMKDDSFFDVYTECRTLCVVQEGFPTYGGLEGGAMERLAVGLYDGMNLDWLAYRIAQVQYLVDGLEEIGVVCQQAGGHAAFVDAGKLLPHIPADQFPAQALACELYKVAGIRAVEIGSFLLGRDPKTGKQLPCPAELLRLTIPRATYTQTHMDFIIEAFKHVKENAANIKGLTFTYEPKVLRHFTAKLKEV.

3 positions are modified to N6-acetyllysine: lysine 5, lysine 115, and lysine 156. Lysine 270 bears the N6-(pyridoxal phosphate)lysine mark. Lysine 450 carries the post-translational modification N6-acetyllysine.

This sequence belongs to the beta-eliminating lyase family. In terms of assembly, homotetramer. The cofactor is pyridoxal 5'-phosphate.

The catalysed reaction is L-tryptophan + H2O = indole + pyruvate + NH4(+). It participates in amino-acid degradation; L-tryptophan degradation via pyruvate pathway; indole and pyruvate from L-tryptophan: step 1/1. The protein is Tryptophanase of Escherichia coli O139:H28 (strain E24377A / ETEC).